The chain runs to 268 residues: tRNA (guanine-N(1)-)-methyltransferase (268 aa).

Residues Gly-113 and 133-138 (IGDYVL) contribute to the S-adenosyl-L-methionine site. A disordered region spans residues 238-268 (RCPPDPFAHQGPVYEGDQLERPEGGEQGASR).

Belongs to the RNA methyltransferase TrmD family. Homodimer.

Its subcellular location is the cytoplasm. The enzyme catalyses guanosine(37) in tRNA + S-adenosyl-L-methionine = N(1)-methylguanosine(37) in tRNA + S-adenosyl-L-homocysteine + H(+). Its function is as follows. Specifically methylates guanosine-37 in various tRNAs. In Thermomicrobium roseum (strain ATCC 27502 / DSM 5159 / P-2), this protein is tRNA (guanine-N(1)-)-methyltransferase.